The primary structure comprises 236 residues: tRNA (guanine-N(1)-)-methyltransferase (236 aa).

S-adenosyl-L-methionine contacts are provided by residues Gly114 and 134 to 139 (IGDYIL).

The protein belongs to the RNA methyltransferase TrmD family. As to quaternary structure, homodimer.

Its subcellular location is the cytoplasm. The enzyme catalyses guanosine(37) in tRNA + S-adenosyl-L-methionine = N(1)-methylguanosine(37) in tRNA + S-adenosyl-L-homocysteine + H(+). Specifically methylates guanosine-37 in various tRNAs. This is tRNA (guanine-N(1)-)-methyltransferase from Wolbachia pipientis wMel.